Here is a 134-residue protein sequence, read N- to C-terminus: DNA-binding protein inhibitor ID-2 (134 aa).

The disordered stretch occupies residues 1 to 24 (MKAFSPVRSVRKNSLSDHGLGISR). Phosphoserine is present on residues Ser-14 and Ser-25. The region spanning 23–75 (SRSKTPVDDPMSLLYNMNDCYSKLKELVPSIPQNKKVSKMEILQHVIDYILDL) is the bHLH domain. The short motif at 106–115 (LNTDISILSL) is the Nuclear export signal element.

Interacts with GATA4 and NKX2-5. Interacts with NR0B2. Interacts with CLOCK and BMAL1. Interacts with IFI204. Interacts with NEDD9/HEF1. Interacts with ASB4; this interaction promotes ID2 proteasomal degradation. Post-translationally, ubiquitinated in a ASB4-depedent manner, leading to proteasomal degradation. In terms of processing, phosphorylated in vitro by CDK1, PKA and PKC.

Its subcellular location is the cytoplasm. It localises to the nucleus. In terms of biological role, transcriptional regulator (lacking a basic DNA binding domain) which negatively regulates the basic helix-loop-helix (bHLH) transcription factors by forming heterodimers and inhibiting their DNA binding and transcriptional activity. Implicated in regulating a variety of cellular processes, including cellular growth, senescence, differentiation, apoptosis, angiogenesis, and neoplastic transformation. Inhibits skeletal muscle and cardiac myocyte differentiation. Regulates the circadian clock by repressing the transcriptional activator activity of the CLOCK-BMAL1 heterodimer. Restricts the CLOCK and BMAL1 localization to the cytoplasm. Plays a role in both the input and output pathways of the circadian clock: in the input component, is involved in modulating the magnitude of photic entrainment and in the output component, contributes to the regulation of a variety of liver clock-controlled genes involved in lipid metabolism. The sequence is that of DNA-binding protein inhibitor ID-2 (ID2) from Bos taurus (Bovine).